Reading from the N-terminus, the 417-residue chain is Serine hydroxymethyltransferase (417 aa).

Residues Leu121 and 125-127 contribute to the (6S)-5,6,7,8-tetrahydrofolate site; that span reads GHL. At Lys229 the chain carries N6-(pyridoxal phosphate)lysine. A (6S)-5,6,7,8-tetrahydrofolate-binding site is contributed by 355-357; it reads SPF.

The protein belongs to the SHMT family. Homodimer. Requires pyridoxal 5'-phosphate as cofactor.

The protein resides in the cytoplasm. It carries out the reaction (6R)-5,10-methylene-5,6,7,8-tetrahydrofolate + glycine + H2O = (6S)-5,6,7,8-tetrahydrofolate + L-serine. Its pathway is one-carbon metabolism; tetrahydrofolate interconversion. It functions in the pathway amino-acid biosynthesis; glycine biosynthesis; glycine from L-serine: step 1/1. Its function is as follows. Catalyzes the reversible interconversion of serine and glycine with tetrahydrofolate (THF) serving as the one-carbon carrier. This reaction serves as the major source of one-carbon groups required for the biosynthesis of purines, thymidylate, methionine, and other important biomolecules. Also exhibits THF-independent aldolase activity toward beta-hydroxyamino acids, producing glycine and aldehydes, via a retro-aldol mechanism. This chain is Serine hydroxymethyltransferase, found in Proteus mirabilis (strain HI4320).